The primary structure comprises 158 residues: Tryptophan-rich protein TspO (158 aa).

Transmembrane regions (helical) follow at residues Ile5–Phe25, Leu48–Leu68, Val79–Phe99, Leu105–Phe125, and Leu134–Leu154.

This sequence belongs to the TspO/BZRP family.

Its subcellular location is the membrane. It localises to the cell membrane. In terms of biological role, binds tetrapyrroles and promotes the photooxidative degradation of protoporphyrin IX. Can bind the benzodiazepine receptor agonist PK-11195 (in vitro); this interferes with photooxidative tetrapyrrole degradation. May play a role in the transmembrane transport of tetrapyrroles and similar compounds. The chain is Tryptophan-rich protein TspO from Chlorobaculum tepidum (strain ATCC 49652 / DSM 12025 / NBRC 103806 / TLS) (Chlorobium tepidum).